The chain runs to 164 residues: Nucleotide-binding protein Daro_3028 (164 aa).

It belongs to the YajQ family.

Its function is as follows. Nucleotide-binding protein. The protein is Nucleotide-binding protein Daro_3028 of Dechloromonas aromatica (strain RCB).